Reading from the N-terminus, the 134-residue chain is Small ribosomal subunit protein uS8 (134 aa).

This sequence belongs to the universal ribosomal protein uS8 family. As to quaternary structure, part of the 30S ribosomal subunit. Contacts proteins S5 and S12.

One of the primary rRNA binding proteins, it binds directly to 16S rRNA central domain where it helps coordinate assembly of the platform of the 30S subunit. The protein is Small ribosomal subunit protein uS8 of Thermosipho melanesiensis (strain DSM 12029 / CIP 104789 / BI429).